A 715-amino-acid polypeptide reads, in one-letter code: Polyribonucleotide nucleotidyltransferase (715 aa).

Residues aspartate 493 and aspartate 499 each contribute to the Mg(2+) site. A KH domain is found at 560–619 (PRMITIKINPEKIRDVIGKGGSVIRALTEETGTTIDISDDGVVTIASTSSEGMAEAKKRI). An S1 motif domain is found at 629 to 697 (GQVYEGTVLK…EKGRVRLSAK (69 aa)).

The protein belongs to the polyribonucleotide nucleotidyltransferase family. The cofactor is Mg(2+).

It is found in the cytoplasm. The enzyme catalyses RNA(n+1) + phosphate = RNA(n) + a ribonucleoside 5'-diphosphate. In terms of biological role, involved in mRNA degradation. Catalyzes the phosphorolysis of single-stranded polyribonucleotides processively in the 3'- to 5'-direction. This is Polyribonucleotide nucleotidyltransferase from Burkholderia vietnamiensis (strain G4 / LMG 22486) (Burkholderia cepacia (strain R1808)).